Consider the following 106-residue polypeptide: uncharacterized protein (106 aa).

The helical transmembrane segment at 78-98 (LAITGYVVSIPIVLPILIIFI) threads the bilayer.

The protein resides in the membrane. This is an uncharacterized protein from Haemophilus influenzae (strain ATCC 51907 / DSM 11121 / KW20 / Rd).